Consider the following 541-residue polypeptide: Tyrosine-protein phosphatase non-receptor type 5 (541 aa).

Positions 1-55 (MCCSERLLGLPQPVEMEAPDEAEGLPSKQKEMPPPPPPSPPSEPAQKLPPQGAGS) are disordered. Pro residues predominate over residues 32-43 (MPPPPPPSPPSE). The next 2 helical transmembrane spans lie at 64-84 (LCLFAASQFLLACGVLWLSGH) and 122-142 (LLLVSLTVSLVIVTTLVWHLL). Residue S221 is modified to Phosphoserine; by PKA. T231 bears the Phosphothreonine; by MAPK mark. S244 carries the post-translational modification Phosphoserine; by MAPK. Positions 276–531 (LQAEFFEIPM…QFVHHAMSLY (256 aa)) constitute a Tyrosine-protein phosphatase domain. Residues D437, 472–478 (CSAGIGR), and Q516 contribute to the substrate site. C472 (phosphocysteine intermediate) is an active-site residue.

This sequence belongs to the protein-tyrosine phosphatase family. Non-receptor class subfamily. Phosphorylation at Ser-221 by PKA deactivates PTPN5. Phosphorylation at Thr-231 and Ser-244 by MAPKs stabilizes the phosphatase, dephosphorylation of these sites results in ubiquitin-mediated degradation of the active phosphatase. In terms of tissue distribution, STEP20 is expressed only in the CNS.

It localises to the endoplasmic reticulum membrane. Its subcellular location is the cytoplasm. The catalysed reaction is O-phospho-L-tyrosyl-[protein] + H2O = L-tyrosyl-[protein] + phosphate. Functionally, may regulate the activity of several effector molecules involved in synaptic plasticity and neuronal cell survival, including MAPKs, Src family kinases and NMDA receptors. The chain is Tyrosine-protein phosphatase non-receptor type 5 (Ptpn5) from Mus musculus (Mouse).